The primary structure comprises 386 residues: Bifunctional enzyme IspD/IspF (386 aa).

The segment at 1–225 (MYNFVTLSIL…SCLSAPSSDT (225 aa)) is 2-C-methyl-D-erythritol 4-phosphate cytidylyltransferase. The segment at 226 to 386 (LSGVGFDVHA…NLKYFDWTKI (161 aa)) is 2-C-methyl-D-erythritol 2,4-cyclodiphosphate synthase. 2 residues coordinate a divalent metal cation: Asp-232 and His-234. 4-CDP-2-C-methyl-D-erythritol 2-phosphate contacts are provided by residues 232-234 (DVH) and 258-259 (HS). An a divalent metal cation-binding site is contributed by His-266. 4-CDP-2-C-methyl-D-erythritol 2-phosphate-binding positions include 280 to 282 (DIG), 285 to 289 (FPDND), 356 to 359 (TTTE), Phe-363, and Arg-366.

In the N-terminal section; belongs to the IspD/TarI cytidylyltransferase family. IspD subfamily. This sequence in the C-terminal section; belongs to the IspF family. Requires a divalent metal cation as cofactor.

The enzyme catalyses 2-C-methyl-D-erythritol 4-phosphate + CTP + H(+) = 4-CDP-2-C-methyl-D-erythritol + diphosphate. It catalyses the reaction 4-CDP-2-C-methyl-D-erythritol 2-phosphate = 2-C-methyl-D-erythritol 2,4-cyclic diphosphate + CMP. It participates in isoprenoid biosynthesis; isopentenyl diphosphate biosynthesis via DXP pathway; isopentenyl diphosphate from 1-deoxy-D-xylulose 5-phosphate: step 2/6. It functions in the pathway isoprenoid biosynthesis; isopentenyl diphosphate biosynthesis via DXP pathway; isopentenyl diphosphate from 1-deoxy-D-xylulose 5-phosphate: step 4/6. Its function is as follows. Bifunctional enzyme that catalyzes the formation of 4-diphosphocytidyl-2-C-methyl-D-erythritol from CTP and 2-C-methyl-D-erythritol 4-phosphate (MEP) (IspD), and catalyzes the conversion of 4-diphosphocytidyl-2-C-methyl-D-erythritol 2-phosphate (CDP-ME2P) to 2-C-methyl-D-erythritol 2,4-cyclodiphosphate (ME-CPP) with a corresponding release of cytidine 5-monophosphate (CMP) (IspF). This is Bifunctional enzyme IspD/IspF from Sulfurimonas denitrificans (strain ATCC 33889 / DSM 1251) (Thiomicrospira denitrificans (strain ATCC 33889 / DSM 1251)).